Consider the following 65-residue polypeptide: Large ribosomal subunit protein uL30 (65 aa).

The protein belongs to the universal ribosomal protein uL30 family. In terms of assembly, part of the 50S ribosomal subunit.

The polypeptide is Large ribosomal subunit protein uL30 (Desulfosudis oleivorans (strain DSM 6200 / JCM 39069 / Hxd3) (Desulfococcus oleovorans)).